A 388-amino-acid chain; its full sequence is UDP-N-acetylglucosamine--N-acetylmuramyl-(pentapeptide) pyrophosphoryl-undecaprenol N-acetylglucosamine transferase (388 aa).

UDP-N-acetyl-alpha-D-glucosamine-binding positions include 15–17 (TGG), Asn-125, Arg-168, Ser-196, and Gln-297.

Belongs to the glycosyltransferase 28 family. MurG subfamily.

Its subcellular location is the cell inner membrane. The enzyme catalyses di-trans,octa-cis-undecaprenyl diphospho-N-acetyl-alpha-D-muramoyl-L-alanyl-D-glutamyl-meso-2,6-diaminopimeloyl-D-alanyl-D-alanine + UDP-N-acetyl-alpha-D-glucosamine = di-trans,octa-cis-undecaprenyl diphospho-[N-acetyl-alpha-D-glucosaminyl-(1-&gt;4)]-N-acetyl-alpha-D-muramoyl-L-alanyl-D-glutamyl-meso-2,6-diaminopimeloyl-D-alanyl-D-alanine + UDP + H(+). It functions in the pathway cell wall biogenesis; peptidoglycan biosynthesis. Cell wall formation. Catalyzes the transfer of a GlcNAc subunit on undecaprenyl-pyrophosphoryl-MurNAc-pentapeptide (lipid intermediate I) to form undecaprenyl-pyrophosphoryl-MurNAc-(pentapeptide)GlcNAc (lipid intermediate II). The polypeptide is UDP-N-acetylglucosamine--N-acetylmuramyl-(pentapeptide) pyrophosphoryl-undecaprenol N-acetylglucosamine transferase (Novosphingobium aromaticivorans (strain ATCC 700278 / DSM 12444 / CCUG 56034 / CIP 105152 / NBRC 16084 / F199)).